The following is a 586-amino-acid chain: Acetylcholinesterase (586 aa).

Residues Met1–Ala21 form the signal peptide. An N-linked (GlcNAc...) asparagine glycan is attached at Asn80. Cysteines 88 and 115 form a disulfide. The Acyl-ester intermediate role is filled by Ser221. Cys275 and Cys286 are oxidised to a cystine. The active-site Charge relay system is the Glu348. A disulfide bridge connects residues Cys423 and Cys542. An N-linked (GlcNAc...) asparagine glycan is attached at Asn437. His461 functions as the Charge relay system in the catalytic mechanism. Residues Asn478 and Asn554 are each glycosylated (N-linked (GlcNAc...) asparagine). Ser564 carries the GPI-anchor amidated serine lipid modification. Positions Ser565–Phe586 are cleaved as a propeptide — removed in mature form.

The protein belongs to the type-B carboxylesterase/lipase family. In terms of assembly, isoform H form is a homodimer; the asymmetric form is a disulfide-bonded oligomer composed of a collagenic subunit (Q) and a variable number of T catalytic subunits. In terms of processing, an interchain disulfide bond is present in what becomes position 593 of the T isoform. As to expression, found in the synapses and to a lower extent in extrajunctional areas of muscle and nerve, and on erythrocyte membranes.

Its subcellular location is the cell membrane. The protein localises to the synapse. It catalyses the reaction acetylcholine + H2O = choline + acetate + H(+). With respect to regulation, inhibited by substrate concentrations above 0.5 mM. Functionally, terminates signal transduction at the neuromuscular junction by rapid hydrolysis of the acetylcholine released into the synaptic cleft. May be involved in cell-cell interactions. In Tetronarce californica (Pacific electric ray), this protein is Acetylcholinesterase (ache).